The following is an 845-amino-acid chain: Extended synaptotagmin-2 (845 aa).

Residues 1–17 (MSSAGGEGPEAGPGRAG) show a composition bias toward gly residues. Residues 1–26 (MSSAGGEGPEAGPGRAGGRSEPEAPG) form a disordered region. Topologically, residues 1–27 (MSSAGGEGPEAGPGRAGGRSEPEAPGS) are cytoplasmic. The helical transmembrane segment at 28 to 48 (ALSVDLPGLLGQLARSFALLL) threads the bilayer. The Lumenal segment spans residues 49-51 (PVY). A helical membrane pass occupies residues 52-72 (ALGYLGLSFSWVLLALGLLAW). Residues 73 to 845 (CRRSRGLKAS…EDGTRPQVIT (773 aa)) lie on the Cytoplasmic side of the membrane. The SMP-LTD domain maps to 115 to 294 (DTERAEWLNK…LPNRITVPLV (180 aa)). C2 domains follow at residues 293–413 (LVSE…DEWF) and 442–563 (VLAD…QLSN). Positions 324, 325, 337, 384, 385, 386, 388, 390, and 391 each coordinate Ca(2+). The interval 584 to 664 (QERPPDYQHS…RDLGRSSSSL (81 aa)) is disordered. The segment covering 612–628 (SQMSASPGTGGANTAPS) has biased composition (polar residues). 2 positions are modified to phosphoserine: serine 615 and serine 617. A Phosphothreonine modification is found at threonine 629. A compositionally biased stretch (basic and acidic residues) spans 634-645 (VDDKPAMEEKPQ). Residues serine 660, serine 662, serine 663, serine 667, serine 679, serine 682, and serine 685 each carry the phosphoserine modification. Residues 710–832 (PLGQIQLTIR…ELAKGWTQWY (123 aa)) enclose the C2 3 domain. The segment at 757–764 (KRRSGRRK) is required for phosphatidylinositol 4,5-bisphosphate-dependent location at the cell membrane.

Belongs to the extended synaptotagmin family. In terms of assembly, homodimer. Interacts with ESYT1 and ESYT3. Interacts with FGFR1 that has been activated by FGF1 binding. Interacts with the AP-2 complex; identified in a complex with the AP-2 complex and FGFR1.

It localises to the cell membrane. The protein localises to the endoplasmic reticulum membrane. In terms of biological role, tethers the endoplasmic reticulum to the cell membrane and promotes the formation of appositions between the endoplasmic reticulum and the cell membrane. Binds glycerophospholipids in a barrel-like domain and may play a role in cellular lipid transport. Plays a role in FGF signaling via its role in the rapid internalization of FGFR1 that has been activated by FGF1 binding; this occurs most likely via the AP-2 complex. Promotes the localization of SACM1L at endoplasmic reticulum-plasma membrane contact sites (EPCS). This Mus musculus (Mouse) protein is Extended synaptotagmin-2 (Esyt2).